A 992-amino-acid chain; its full sequence is Probable translation initiation factor IF-2 (992 aa).

The region spanning 96 to 220 (KNWHGVTVTP…LSLALLRFGI (125 aa)) is the DOD-type homing endonuclease domain. The tr-type G domain occupies 399-616 (TTETHNFIAN…LIAGLSQRYL (218 aa)). GTP-binding positions include 472–476 (DTPGH) and 526–529 (NKID).

The protein belongs to the TRAFAC class translation factor GTPase superfamily. Classic translation factor GTPase family. IF-2 subfamily. Post-translationally, this protein undergoes a protein self splicing that involves a post-translational excision of the intervening region (intein) followed by peptide ligation.

Function in general translation initiation by promoting the binding of the formylmethionine-tRNA to ribosomes. Seems to function along with eIF-2. The chain is Probable translation initiation factor IF-2 (infB) from Pyrococcus abyssi (strain GE5 / Orsay).